The chain runs to 1187 residues: DNA-directed RNA polymerase subunit beta (1187 aa).

The interval 1150 to 1187 is disordered; it reads KDEDDDPASSADDLGFNIGARPDAAAKEDQKAEEPEYQ. Positions 1173-1187 are enriched in basic and acidic residues; it reads AAAKEDQKAEEPEYQ.

This sequence belongs to the RNA polymerase beta chain family. The RNAP catalytic core consists of 2 alpha, 1 beta, 1 beta' and 1 omega subunit. When a sigma factor is associated with the core the holoenzyme is formed, which can initiate transcription.

It carries out the reaction RNA(n) + a ribonucleoside 5'-triphosphate = RNA(n+1) + diphosphate. Its function is as follows. DNA-dependent RNA polymerase catalyzes the transcription of DNA into RNA using the four ribonucleoside triphosphates as substrates. This chain is DNA-directed RNA polymerase subunit beta, found in Bifidobacterium longum (strain DJO10A).